The sequence spans 139 residues: Cellular retinoic acid-binding protein 2 (139 aa).

The Nuclear localization signal signature appears at 21 to 31; it reads KALGVNMMMRK. A Glycyl lysine isopeptide (Lys-Gly) (interchain with G-Cter in SUMO) cross-link involves residue K103. 134–136 serves as a coordination point for all-trans-retinoate; that stretch reads RVY.

The protein belongs to the calycin superfamily. Fatty-acid binding protein (FABP) family. As to quaternary structure, interacts with importin alpha, RXR and RARA. Sumoylated in response to retinoic acid binding, sumoylation is critical for dissociation from ER and subsequent nuclear translocation.

The protein localises to the cytoplasm. It is found in the endoplasmic reticulum. The protein resides in the nucleus. Functionally, transports retinoic acid to the nucleus. Regulates the access of retinoic acid to the nuclear retinoic acid receptors. The protein is Cellular retinoic acid-binding protein 2 (Crabp2) of Rattus norvegicus (Rat).